Here is a 397-residue protein sequence, read N- to C-terminus: Lysophospholipid transporter LplT (397 aa).

The Periplasmic portion of the chain corresponds to 1–17; it reads MSESVHTNTSLWSKGMK. A helical transmembrane segment spans residues 18-38; that stretch reads AVIVAQFLSAFGDNALLFATL. At 39–52 the chain is on the cytoplasmic side; it reads ALLNAQFYPEWSQP. A helical membrane pass occupies residues 53–73; it reads ILQMVFVGAYILFAPFVGQVA. Over 74–90 the chain is Periplasmic; it reads DSFAKGRVMMFANGLKL. A helical membrane pass occupies residues 91-111; the sequence is LGAASICFGINPFLGYTLVGV. Topologically, residues 112–144 are cytoplasmic; that stretch reads GAAAYSPAKYGILGELTTGSKLVKANGLMEAST. A helical membrane pass occupies residues 145 to 165; it reads IAAILLGSVAGGVLADWHVLV. Ala166 is a topological domain (periplasmic). Residues 167–187 form a helical membrane-spanning segment; the sequence is LAACALAYGGAVVANIYIPKL. At 188 to 226 the chain is on the cytoplasmic side; sequence AAARPGQSWNLINMTRSFLNACTSLWRNGETRFSLVGTS. Residues 227–247 traverse the membrane as a helical segment; that stretch reads LFWGAGVTLRFLLVLWVPVAL. Topologically, residues 248–256 are periplasmic; that stretch reads GITDNATPT. The helical transmembrane segment at 257–277 threads the bilayer; the sequence is YLNAMVAIGIVVGAGAAAKLV. At 278–280 the chain is on the cytoplasmic side; sequence TLE. The chain crosses the membrane as a helical span at residues 281–301; that stretch reads TVSRCMPAGILIGVVVLIFSL. The Periplasmic segment spans residues 302 to 304; it reads QHE. The helical transmembrane segment at 305–325 threads the bilayer; sequence LLPAYALLMLIGVMGGFFVVP. At 326–343 the chain is on the cytoplasmic side; the sequence is LNALLQERGKKSVGAGNA. A helical transmembrane segment spans residues 344-364; the sequence is IAVQNLGENSAMLLMLGIYSL. Over 365–366 the chain is Periplasmic; sequence AV. A helical membrane pass occupies residues 367–387; that stretch reads MIGIPVVPIGIGFGALFALAI. Residues 388 to 397 are Cytoplasmic-facing; the sequence is TALWIWQRRH.

Belongs to the major facilitator superfamily. LplT (TC 2.A.1.42) family.

It localises to the cell inner membrane. Its function is as follows. Catalyzes the facilitated diffusion of 2-acyl-glycero-3-phosphoethanolamine (2-acyl-GPE) into the cell. The chain is Lysophospholipid transporter LplT from Escherichia coli (strain SE11).